The primary structure comprises 83 residues: Small ribosomal subunit protein uS17 (83 aa).

Belongs to the universal ribosomal protein uS17 family. As to quaternary structure, part of the 30S ribosomal subunit.

In terms of biological role, one of the primary rRNA binding proteins, it binds specifically to the 5'-end of 16S ribosomal RNA. This Buchnera aphidicola subsp. Acyrthosiphon pisum (strain 5A) protein is Small ribosomal subunit protein uS17.